The following is a 467-amino-acid chain: Zinc finger and BTB domain-containing protein 43 (467 aa).

N-acetylmethionine is present on M1. In terms of domain architecture, BTB spans 33–97 (CDVSIVVQGH…SYTGRLVMPA (65 aa)). Disordered stretches follow at residues 134–153 (LNHGSDHQSPSSSSYNGLVE) and 162–225 (HTDF…SAEF). Basic and acidic residues-rich tracts occupy residues 164–174 (DFPKAQELRDG) and 182–194 (KDELSSQLTEHEY). Residues K182, K241, K247, K297, and K358 each participate in a glycyl lysine isopeptide (Lys-Gly) (interchain with G-Cter in SUMO2) cross-link. The C2H2-type 1; atypical zinc finger occupies 373–394 (YPCQCGKSFTHKSQRDRHMSMH). The segment at 400–422 (YGCGVCGKKFKMKHHLVGHMKIH) adopts a C2H2-type 2 zinc-finger fold. Position 423 is a phosphothreonine (T423). Residues 428–450 (YECNICAKRFMWRDSFHRHVTSC) form a C2H2-type 3; atypical zinc finger. A Glycyl lysine isopeptide (Lys-Gly) (interchain with G-Cter in SUMO2) cross-link involves residue K458.

The protein belongs to the krueppel C2H2-type zinc-finger protein family. As to quaternary structure, interacts with BDP1.

The protein resides in the nucleus. In terms of biological role, may be involved in transcriptional regulation. The sequence is that of Zinc finger and BTB domain-containing protein 43 (ZBTB43) from Homo sapiens (Human).